The following is a 203-amino-acid chain: Probable NADPH:quinone oxidoreductase 2 (203 aa).

This sequence belongs to the SsuE family. Homotetramer. FMN serves as cofactor.

The enzyme catalyses a quinone + NADH + H(+) = a quinol + NAD(+). It catalyses the reaction a quinone + NADPH + H(+) = a quinol + NADP(+). In terms of biological role, the enzyme apparently serves as a quinone reductase in connection with conjugation reactions of hydroquinones involved in detoxification pathways. This Oryza sativa subsp. japonica (Rice) protein is Probable NADPH:quinone oxidoreductase 2.